The primary structure comprises 494 residues: Ribose import ATP-binding protein RbsA (494 aa).

ABC transporter domains follow at residues 2 to 239 (IDMR…VGRQ) and 251 to 493 (IGEE…TGGN). 34 to 41 (GENGAGKS) contacts ATP.

It belongs to the ABC transporter superfamily. Ribose importer (TC 3.A.1.2.1) family. The complex is composed of an ATP-binding protein (RbsA), two transmembrane proteins (RbsC) and a solute-binding protein (RbsB).

The protein localises to the cell membrane. The catalysed reaction is D-ribose(out) + ATP + H2O = D-ribose(in) + ADP + phosphate + H(+). Its function is as follows. Part of the ABC transporter complex RbsABC involved in ribose import. Responsible for energy coupling to the transport system. The protein is Ribose import ATP-binding protein RbsA of Geobacillus kaustophilus (strain HTA426).